A 108-amino-acid chain; its full sequence is Cell division topological specificity factor (108 aa).

This sequence belongs to the MinE family.

Its function is as follows. Prevents the cell division inhibition by proteins MinC and MinD at internal division sites while permitting inhibition at polar sites. This ensures cell division at the proper site by restricting the formation of a division septum at the midpoint of the long axis of the cell. This chain is Cell division topological specificity factor, found in Prochlorococcus marinus (strain AS9601).